The primary structure comprises 184 residues: Probable RNA 2'-phosphotransferase (184 aa).

This sequence belongs to the KptA/TPT1 family.

Functionally, removes the 2'-phosphate from RNA via an intermediate in which the phosphate is ADP-ribosylated by NAD followed by a presumed transesterification to release the RNA and generate ADP-ribose 1''-2''-cyclic phosphate (APPR&gt;P). May function as an ADP-ribosylase. This is Probable RNA 2'-phosphotransferase from Rhizobium johnstonii (strain DSM 114642 / LMG 32736 / 3841) (Rhizobium leguminosarum bv. viciae).